We begin with the raw amino-acid sequence, 555 residues long: Neutral amino acid transporter B(0) (555 aa).

The residue at position 1 (Met1) is an N-acetylmethionine. Residues 1–52 (MAVDPPKADPKGVVAVDPTANCGSGLKSREDQGAKAGGCCSSRDQVCRCLRA) are Cytoplasmic-facing. A helical membrane pass occupies residues 53 to 82 (NLLVLLTVAAAVAGVVLGLGVSAAGGAEAL). Residues 83–95 (GHARFTAFAFPGE) are Extracellular-facing. A helical membrane pass occupies residues 96-117 (LLLRLLEMIILPLVVCSLIGGA). At 118 to 131 (ASLDPSALGRLGAW) the chain is on the cytoplasmic side. The helical transmembrane segment at 132-154 (ALLFFLVTTLLSSALGVALALAL) threads the bilayer. At 155–239 (KPGAAFAAIN…SNATMDQPHC (85 aa)) the chain is on the extracellular side. Asn164 and Asn231 each carry an N-linked (GlcNAc...) asparagine glycan. A helical transmembrane segment spans residues 240 to 262 (EMKMNILGLVVFAIVFGVALRKL). Residues 263–271 (GPEGELLIR) lie on the Cytoplasmic side of the membrane. Residues 272–299 (FFNSFNDATMVLVSWIMWYAPIGILFLV) traverse the membrane as a helical segment. At 300-320 (AGKIVEMKDIRQLFIGLGKYI) the chain is on the extracellular side. The chain crosses the membrane as a helical span at residues 321 to 342 (VCCLLGHAIHGLLVLPLIYFLF). Residues 343 to 347 (TRKNP) are Cytoplasmic-facing. Positions 348–378 (YRFLWGIVTPLATAFGTSSSSATLPLMMKCV) form an intramembrane region, discontinuously helical. The Cytoplasmic segment spans residues 379-387 (EEKNGVAKH). The helical transmembrane segment at 388-414 (ISRFILPIGATVNMDGAALFQCVAAVF) threads the bilayer. Na(+) is bound by residues Gly396, Thr398, and Asn400. Residues 415–427 (IAQLNGMSLDFVK) are Extracellular-facing. Positions 428 to 461 (IITILVTATASSVGAAGIPAGGVLTLAIILEAIS) form an intramembrane region, discontinuously helical. Topologically, residues 462–474 (LPVKDISLILAVD) are extracellular. Residues 475-496 (WLVDRSCTVLNVEGDAFGAGLL) traverse the membrane as a helical segment. Residues Asn485 and Asp489 each contribute to the Na(+) site. Residues 497–555 (QSYVDRTKMPSSEPELIQVKNDVSLKPLPLATEEGNPLLKQCREPSGDSSATCEKESVM) lie on the Cytoplasmic side of the membrane. A phosphoserine mark is found at Ser507, Ser508, Ser520, Ser545, and Ser553. Residues 534–555 (LLKQCREPSGDSSATCEKESVM) form a disordered region.

This sequence belongs to the dicarboxylate/amino acid:cation symporter (DAACS) (TC 2.A.23) family. In terms of assembly, homotrimer.

Its subcellular location is the cell membrane. The protein localises to the melanosome. It catalyses the reaction L-glutamine(out) + L-serine(in) + Na(+)(out) = L-glutamine(in) + L-serine(out) + Na(+)(in). The enzyme catalyses L-glutamine(in) + L-serine(out) + Na(+)(out) = L-glutamine(out) + L-serine(in) + Na(+)(in). It carries out the reaction L-threonine(in) + L-glutamine(out) + Na(+)(out) = L-threonine(out) + L-glutamine(in) + Na(+)(in). The catalysed reaction is L-threonine(out) + L-glutamine(in) + Na(+)(out) = L-threonine(in) + L-glutamine(out) + Na(+)(in). It catalyses the reaction L-asparagine(in) + L-glutamine(out) + Na(+)(out) = L-asparagine(out) + L-glutamine(in) + Na(+)(in). The enzyme catalyses L-asparagine(out) + L-glutamine(in) + Na(+)(out) = L-asparagine(in) + L-glutamine(out) + Na(+)(in). It carries out the reaction L-glutamine(in) + L-alanine(out) + Na(+)(out) = L-glutamine(out) + L-alanine(in) + Na(+)(in). The catalysed reaction is L-valine(out) + L-glutamine(in) + Na(+)(out) = L-valine(in) + L-glutamine(out) + Na(+)(in). It catalyses the reaction L-glutamine(in) + L-methionine(out) + Na(+)(out) = L-glutamine(out) + L-methionine(in) + Na(+)(in). The enzyme catalyses L-glutamine(in) + L-glutamate(out) + Na(+)(out) + H(+)(out) = L-glutamine(out) + L-glutamate(in) + Na(+)(in) + H(+)(in). It carries out the reaction D-serine(in) + L-glutamine(out) + Na(+)(out) = D-serine(out) + L-glutamine(in) + Na(+)(in). The catalysed reaction is D-serine(in) + L-alanine(out) + Na(+)(out) = D-serine(out) + L-alanine(in) + Na(+)(in). It catalyses the reaction nitrate(in) = nitrate(out). The enzyme catalyses iodide(out) = iodide(in). It carries out the reaction thiocyanate(in) = thiocyanate(out). Its activity is regulated as follows. Down-regulated at acidic pH. Functionally, sodium-coupled antiporter of neutral amino acids. In a tri-substrate transport cycle, exchanges neutral amino acids between the extracellular and intracellular compartments, coupled to the inward cotransport of at least one sodium ion. The preferred substrate is the essential amino acid L-glutamine, a precursor for biosynthesis of proteins, nucleotides and amine sugars as well as an alternative fuel for mitochondrial oxidative phosphorylation. Exchanges L-glutamine with other neutral amino acids such as L-serine, L-threonine and L-asparagine in a bidirectional way. Provides L-glutamine to proliferating stem and activated cells driving the metabolic switch toward cell differentiation. The transport cycle is usually pH-independent, with the exception of L-glutamate. Transports extracellular L-glutamate coupled to the cotransport of one proton and one sodium ion in exchange for intracellular L-glutamine counter-ion. May provide for L-glutamate uptake in glial cells regulating glutamine/glutamate cycle in the nervous system. Can transport D-amino acids. Mediates D-serine release from the retinal glia potentially affecting NMDA receptor function in retinal neurons. Displays sodium- and amino acid-dependent but uncoupled channel-like anion conductance with a preference SCN(-) &gt;&gt; NO3(-) &gt; I(-) &gt; Cl(-). Through binding of the fusogenic protein syncytin-1/ERVW-1 may mediate trophoblasts syncytialization, the spontaneous fusion of their plasma membranes, an essential process in placental development. In Rattus norvegicus (Rat), this protein is Neutral amino acid transporter B(0) (Slc1a5).